A 304-amino-acid chain; its full sequence is MRVLVAGATGVIGHPLVGALRARGHNVSALVRDASRAPEADRVVVADALDREAVLSAVSAARPEVVVHQLTALRLLRDDPPEAFAQTARLRTEGTAHLVEAARAAGARRLVAQSIAFAAAPQGPPVLDEDAPLYVDAPDPGWAATVRAVAELERLVASSDLAGLVLRYGTLYGPGTGYARDGGTALRVLAGKLPLPEGGAGVTSFLHVDDAVGAAVAAVESEATGCLHVTDDEPAPAAQWLPHYARTLGAPPPRTLPAALAPRLLGWFMTHQLTTARGAANDRARTALGWKPTHPSWRDGLGRE.

The protein belongs to the NAD(P)-dependent epimerase/dehydratase family.

The catalysed reaction is 3-diazoavenalumate + NADPH + H(+) = avenalumate + N2 + NADP(+). It catalyses the reaction 3-diazoavenalumate + NADH + H(+) = avenalumate + N2 + NAD(+). The enzyme catalyses (E)-3-diazocoumarate + NADPH = N2 + (E)-4-coumarate + NADP(+). It carries out the reaction (E)-3-diazocoumarate + NADH = N2 + (E)-4-coumarate + NAD(+). Oxidoreductase involved in the biosynthesis of avenalumic acid (AVA). Catalyzes the denitrification of 3-diazoavenalumic acid (3-DAA) to produce AVA. It can also act on 3-diazocoumaric acid (3-DCA). Can use NADPH or NADH as a reductant, with a preference for NADPH. This Streptomyces sp protein is 3-diazoavenalumate denitrifying reductase.